A 554-amino-acid polypeptide reads, in one-letter code: (Z)-gamma-bisabolene synthase 1 (554 aa).

Mg(2+)-binding residues include aspartate 306, aspartate 310, aspartate 450, and aspartate 458. The short motif at 306-310 (DDACD) is the DDXXD motif element.

The protein belongs to the terpene synthase family. Tpsa subfamily. Requires Mg(2+) as cofactor. The cofactor is Mn(2+). In terms of tissue distribution, predominantly expressed in roots. Expressed in the cortex and the sub-epidermal layers of roots. Also detected in leaf hydathodes and flower stigmata.

The protein localises to the cytoplasm. It catalyses the reaction (2E,6E)-farnesyl diphosphate = (Z)-gamma-bisabolene + diphosphate. It participates in secondary metabolite biosynthesis; terpenoid biosynthesis. In terms of biological role, involved in sesquiterpene (C15) biosynthesis. The major product is (Z)-gamma-bisabolene with minor amounts of (E)-nerolidol and alpha-bisabolol. This is (Z)-gamma-bisabolene synthase 1 (TPS12) from Arabidopsis thaliana (Mouse-ear cress).